A 404-amino-acid chain; its full sequence is CCA-adding enzyme (404 aa).

Residues glycine 32 and arginine 35 each contribute to the ATP site. Residues glycine 32 and arginine 35 each contribute to the CTP site. The Mg(2+) site is built by aspartate 45 and aspartate 47. Residues arginine 116, aspartate 159, arginine 162, arginine 165, and arginine 168 each contribute to the ATP site. 5 residues coordinate CTP: arginine 116, aspartate 159, arginine 162, arginine 165, and arginine 168.

It belongs to the tRNA nucleotidyltransferase/poly(A) polymerase family. Bacterial CCA-adding enzyme type 3 subfamily. Homodimer. The cofactor is Mg(2+).

The catalysed reaction is a tRNA precursor + 2 CTP + ATP = a tRNA with a 3' CCA end + 3 diphosphate. It catalyses the reaction a tRNA with a 3' CCA end + 2 CTP + ATP = a tRNA with a 3' CCACCA end + 3 diphosphate. In terms of biological role, catalyzes the addition and repair of the essential 3'-terminal CCA sequence in tRNAs without using a nucleic acid template. Adds these three nucleotides in the order of C, C, and A to the tRNA nucleotide-73, using CTP and ATP as substrates and producing inorganic pyrophosphate. tRNA 3'-terminal CCA addition is required both for tRNA processing and repair. Also involved in tRNA surveillance by mediating tandem CCA addition to generate a CCACCA at the 3' terminus of unstable tRNAs. While stable tRNAs receive only 3'-terminal CCA, unstable tRNAs are marked with CCACCA and rapidly degraded. The chain is CCA-adding enzyme from Ligilactobacillus salivarius (strain UCC118) (Lactobacillus salivarius).